The primary structure comprises 200 residues: MLTALLAVLGGYLLGSIPTGYWVGRWWGGIDIRQQGSGSTGATNVLRTLGKGPALLVLLVDAAKGAAAVALGSALGSAWWVVLAALFAVIGHSRSCWLGFRGGKSVATSLGILLAMAWPVALTTFGVWLLGLALTRIVSFSSLLAAVAAPVVMWATAQPLPYLLFALAGGVYVIGAHRRNIERLLAGSEPRIGQKWTQSP.

4 consecutive transmembrane segments (helical) span residues 4-24 (ALLA…YWVG), 70-90 (ALGS…FAVI), 110-130 (LGIL…VWLL), and 158-178 (QPLP…GAHR).

Belongs to the PlsY family. As to quaternary structure, probably interacts with PlsX.

It localises to the cell inner membrane. It carries out the reaction an acyl phosphate + sn-glycerol 3-phosphate = a 1-acyl-sn-glycero-3-phosphate + phosphate. The protein operates within lipid metabolism; phospholipid metabolism. Catalyzes the transfer of an acyl group from acyl-phosphate (acyl-PO(4)) to glycerol-3-phosphate (G3P) to form lysophosphatidic acid (LPA). This enzyme utilizes acyl-phosphate as fatty acyl donor, but not acyl-CoA or acyl-ACP. This chain is Glycerol-3-phosphate acyltransferase, found in Synechococcus sp. (strain JA-2-3B'a(2-13)) (Cyanobacteria bacterium Yellowstone B-Prime).